We begin with the raw amino-acid sequence, 116 residues long: uncharacterized protein (116 aa).

This is an uncharacterized protein from Homo sapiens (Human).